The chain runs to 66 residues: Potassium channel toxin alpha-KTx 30.1 (66 aa).

The first 24 residues, 1-24, serve as a signal peptide directing secretion; the sequence is MNTGFFFFVIMATGLVLTFDTIHA. Intrachain disulfides connect Cys-30–Cys-50, Cys-36–Cys-55, and Cys-40–Cys-57.

This sequence belongs to the short scorpion toxin superfamily. Potassium channel inhibitor family. Alpha-KTx 30 subfamily. In terms of tissue distribution, expressed by the venom gland.

Its subcellular location is the secreted. Functionally, inhibits Kv1.3/KCNA3 channel (1 uM of the toxin inhibits currents by 64.1%). The sequence is that of Potassium channel toxin alpha-KTx 30.1 from Scorpiops margerisonae (Scorpion).